The following is a 406-amino-acid chain: Argininosuccinate synthase (406 aa).

9-17 lines the ATP pocket; that stretch reads AYSGGLDTS. Position 86 (Tyr86) interacts with L-citrulline. Gly116 serves as a coordination point for ATP. The L-aspartate site is built by Thr118, Asn122, and Asp123. Asn122 is a binding site for L-citrulline. Arg126, Ser174, Ser183, Glu259, and Tyr271 together coordinate L-citrulline.

It belongs to the argininosuccinate synthase family. Type 1 subfamily. Homotetramer.

The protein localises to the cytoplasm. It catalyses the reaction L-citrulline + L-aspartate + ATP = 2-(N(omega)-L-arginino)succinate + AMP + diphosphate + H(+). It participates in amino-acid biosynthesis; L-arginine biosynthesis; L-arginine from L-ornithine and carbamoyl phosphate: step 2/3. This is Argininosuccinate synthase from Geobacillus thermodenitrificans (strain NG80-2).